We begin with the raw amino-acid sequence, 260 residues long: RxLR effector protein BLR38 (260 aa).

The signal sequence occupies residues 1-18 (MHCTVFFLLIACAKSSYG). The short motif at 46-49 (RLLR) is the RxLR element. The Nuclear localuization signal (NLS) signature appears at 136–148 (MPSSRKRPRALDE).

This sequence belongs to the RxLR effector family.

It is found in the secreted. The protein resides in the host nucleus. Secreted effector that triggers a robust hypersensitive response (HR) in Lactuca serriola LS102. The response to BLN06 was visible as strong necrosis. Although effector recognition is frequently associated with single dominant R gene loci, the recognition of BLR38 requires 2 unlinked loci that display incomplete dominance. In Bremia lactucae (Lettuce downy mildew), this protein is RxLR effector protein BLR38.